The sequence spans 137 residues: Crustacean calcium-binding protein 23 (137 aa).

3 consecutive EF-hand domains span residues 27 to 48, 62 to 97, and 100 to 135; these read RDSS…FGLD, EKKA…KVVK, and ATEE…YSGL.

In terms of assembly, monomer or disulfide-linked dimers.

Possibly acts as a regulatory protein and not as a calcium buffer or transport protein. This is Crustacean calcium-binding protein 23 from Homarus americanus (American lobster).